The following is a 985-amino-acid chain: DNA repair protein REV1 (985 aa).

One can recognise a BRCT domain in the interval 161-249 (QSSKIFKNCV…RLLPWQNYSL (89 aa)). Residues 319–329 (YFAHSRLHHLS) form an interaction with target DNA region. Residues Arg-324 and 362-366 (DFDCF) each bind dCTP. Residues 358–554 (IFHIDFDCFF…FKLDDLPGVG (197 aa)) enclose the UmuC domain. Positions 362 and 363 each coordinate Mg(2+). The segment at 395–397 (TKN) is interaction with target DNA. DCTP is bound by residues 402-408 (SCNYVAR), Asn-414, and Asp-467. Mg(2+) is bound by residues Asp-467 and Glu-468. 2 interaction with target DNA regions span residues 554-557 (GHST) and 620-628 (RKSLSIDIN).

It belongs to the DNA polymerase type-Y family. Interacts with REV7. Requires Mg(2+) as cofactor.

It is found in the nucleus. The protein localises to the mitochondrion. Functionally, deoxycytidyl transferase involved in DNA repair. Transfers a dCMP residue from dCTP to the 3'-end of a DNA primer in a template-dependent reaction. May assist in the first step in the bypass of abasic lesions by the insertion of a nucleotide opposite the lesion. Required for normal induction of mutations by physical and chemical agents. Involved in mitochondrial DNA mutagenesis. The sequence is that of DNA repair protein REV1 (REV1) from Saccharomyces cerevisiae (strain ATCC 204508 / S288c) (Baker's yeast).